The following is a 1358-amino-acid chain: Mediator of RNA polymerase II transcription subunit 12 (1358 aa).

A coiled-coil region spans residues 629-654; sequence VRYNYEQLQIQLNTAKEQMLQEQFEH.

The protein belongs to the Mediator complex subunit 12 family. Component of the SRB8-11 complex, which itself associates with the Mediator complex.

Its subcellular location is the nucleus. In terms of biological role, component of the SRB8-11 complex. The SRB8-11 complex is a regulatory module of the Mediator complex which is itself involved in regulation of basal and activated RNA polymerase II-dependent transcription. The SRB8-11 complex may be involved in the transcriptional repression of a subset of genes regulated by Mediator. It may inhibit the association of the Mediator complex with RNA polymerase II to form the holoenzyme complex. This is Mediator of RNA polymerase II transcription subunit 12 (SRB8) from Eremothecium gossypii (strain ATCC 10895 / CBS 109.51 / FGSC 9923 / NRRL Y-1056) (Yeast).